Consider the following 1002-residue polypeptide: Calcium-transporting ATPase sarcoplasmic/endoplasmic reticulum type (1002 aa).

The Cytoplasmic portion of the chain corresponds to 1–48 (MEDGHSKTVEQSLNFFGTDGERGLTLDQIKTNQAKYGPNELPTEEGKS). A helical transmembrane segment spans residues 49 to 69 (IWQLVLEQFDDLLVKILLLAA). The Lumenal portion of the chain corresponds to 70–89 (IISFVLALFEEHEETFTAFV). The chain crosses the membrane as a helical span at residues 90-110 (EPLVILLILIANAVVGVWQER). Over 111 to 253 (NAESAIEALK…EIKTPLQQKL (143 aa)) the chain is Cytoplasmic. A helical membrane pass occupies residues 254 to 273 (DEFGEQLSKVISVICVAVWA). Topologically, residues 274–295 (INIGHFNDPAHGGSWIKGAIYY) are lumenal. Residues 296-313 (FKIAVALAVAAIPEGLPA) form a helical membrane-spanning segment. Ca(2+)-binding residues include valine 304, alanine 305, isoleucine 307, and glutamate 309. Topologically, residues 314-757 (VITTCLALGT…EEGRAIYNNM (444 aa)) are cytoplasmic. Aspartate 351 functions as the 4-aspartylphosphate intermediate in the catalytic mechanism. Mg(2+) contacts are provided by aspartate 703 and aspartate 707. The chain crosses the membrane as a helical span at residues 758 to 777 (KQFIRYLISSNIGEVVSIFL). Ca(2+)-binding residues include asparagine 768 and glutamate 771. The Lumenal segment spans residues 778-787 (TAALGLPEAL). A helical transmembrane segment spans residues 788 to 808 (IPVQLLWVNLVTDGLPATALG). The Ca(2+) site is built by asparagine 796, threonine 799, and aspartate 800. At 809 to 828 (FNPPDLDIMDKPPRKADEGL) the chain is on the cytoplasmic side. Residues 829-851 (ISGWLFFRYMAIGFYVGAATVGA) form a helical membrane-spanning segment. Residues 852–897 (AAWWFIASSEGPGLTYWQLTHHLSCLGGGDEFKGVDCKIFSDPKAM) are Lumenal-facing. The helical transmembrane segment at 898-917 (TMALSVLVTIEMLNAMNSLS) threads the bilayer. Glutamate 908 serves as a coordination point for Ca(2+). Over 918 to 930 (ENQSLISMPPWCN) the chain is Cytoplasmic. A helical transmembrane segment spans residues 931–949 (LWLIGSMALSFTLHFVILY). Residues 950–964 (VDVLSTVFQVTPLSA) are Lumenal-facing. Residues 965–985 (EEWITVMKFSIPVVLLDETLK) traverse the membrane as a helical segment. Residues 986-1002 (FVARKIADVPDAVVDKW) are Cytoplasmic-facing.

It belongs to the cation transport ATPase (P-type) (TC 3.A.3) family.

The protein localises to the endoplasmic reticulum membrane. It is found in the sarcoplasmic reticulum membrane. The catalysed reaction is Ca(2+)(in) + ATP + H2O = Ca(2+)(out) + ADP + phosphate + H(+). This magnesium-dependent enzyme catalyzes the hydrolysis of ATP coupled with the transport of calcium. This chain is Calcium-transporting ATPase sarcoplasmic/endoplasmic reticulum type, found in Drosophila pseudoobscura pseudoobscura (Fruit fly).